Consider the following 106-residue polypeptide: uncharacterized protein (106 aa).

Polar residues predominate over residues 24–35 (ANSISSTSFYHK). Disordered stretches follow at residues 24–49 (ANSI…SCEE) and 65–87 (LTAE…SSDE). Composition is skewed to low complexity over residues 36–46 (SSNNNSHANAS) and 74–85 (SLSASNQPASSS).

This is an uncharacterized protein from Arabidopsis thaliana (Mouse-ear cress).